Reading from the N-terminus, the 69-residue chain is Cell division protein ZapB (69 aa).

Residues 3–60 (LELFNQLEQKVQNAVETIEMLKMEAEELREENTRLKQERDEWERRLNGLLGKFQEIED) adopt a coiled-coil conformation.

It belongs to the ZapB family. As to quaternary structure, homodimer. The ends of the coiled-coil dimer bind to each other, forming polymers. Interacts with FtsZ.

The protein resides in the cytoplasm. Functionally, non-essential, abundant cell division factor that is required for proper Z-ring formation. It is recruited early to the divisome by direct interaction with FtsZ, stimulating Z-ring assembly and thereby promoting cell division earlier in the cell cycle. Its recruitment to the Z-ring requires functional FtsA or ZipA. This Chromohalobacter salexigens (strain ATCC BAA-138 / DSM 3043 / CIP 106854 / NCIMB 13768 / 1H11) protein is Cell division protein ZapB.